The following is a 311-amino-acid chain: Homeobox protein knotted-1-like 10 (311 aa).

Disordered stretches follow at residues 1–45 (MEDL…PATT) and 153–184 (LCGG…DAAD). Over residues 12-22 (SRGGGGGGGGA) the composition is skewed to gly residues. Positions 197 to 217 (ELKEMLLKKYSGCLSRLRSEF) constitute an ELK domain. Residues 218 to 281 (LKKRKKGKLP…NQRKRHWKPS (64 aa)) constitute a DNA-binding region (homeobox; TALE-type).

The protein belongs to the TALE/KNOX homeobox family.

The protein localises to the nucleus. In terms of biological role, probable transcription factor that may be involved in shoot formation during embryogenesis. The protein is Homeobox protein knotted-1-like 10 (OSH71) of Oryza sativa subsp. indica (Rice).